The primary structure comprises 132 residues: Hemoglobin heart muscle subunit alpha-type (132 aa).

The region spanning 1-132 is the Globin domain; it reads GLSDSEKSAV…GEVGAILTSS (132 aa). Residues H58 and H83 each coordinate heme b.

Belongs to the globin family. Monomer.

This hemoglobin may replace myocardial myoglobin in this amphibian species. This is Hemoglobin heart muscle subunit alpha-type from Aquarana catesbeiana (American bullfrog).